Consider the following 429-residue polypeptide: Enolase (429 aa).

Gln-164 is a binding site for (2R)-2-phosphoglycerate. The active-site Proton donor is Glu-206. Mg(2+)-binding residues include Asp-243, Glu-286, and Asp-313. Positions 338, 367, 368, and 389 each coordinate (2R)-2-phosphoglycerate. Catalysis depends on Lys-338, which acts as the Proton acceptor.

The protein belongs to the enolase family. Requires Mg(2+) as cofactor.

The protein resides in the cytoplasm. It is found in the secreted. The protein localises to the cell surface. The enzyme catalyses (2R)-2-phosphoglycerate = phosphoenolpyruvate + H2O. The protein operates within carbohydrate degradation; glycolysis; pyruvate from D-glyceraldehyde 3-phosphate: step 4/5. In terms of biological role, catalyzes the reversible conversion of 2-phosphoglycerate (2-PG) into phosphoenolpyruvate (PEP). It is essential for the degradation of carbohydrates via glycolysis. The protein is Enolase of Thermosipho melanesiensis (strain DSM 12029 / CIP 104789 / BI429).